The sequence spans 160 residues: Putative oxygenase ATEG_00330 (160 aa).

The 77-residue stretch at 24 to 100 (HYFGTALHAK…RNIAADPEFA (77 aa)) folds into the EthD domain.

It belongs to the tpcK family.

Its function is as follows. Putative oxygenase; part of the gene cluster that mediates the biosynthesis of isoflavipucine. The PKS part of the PKS-NRPS ATEG_00325 probably assembles a triketide from an acetyl starter and two malonyl-CoA extender units. The poly-beta-keto intermediate would then be fused to the leucine unit by the NRPS part. The resulting amide would be liberated from the PKS-NRPS through reductive release of the linear PKS-NRPS product from the enzyme complex. Further steps in isoflapucine synthesis include a cyclization step, an oxidation step, a hydrolysis step involving a trans-amidation, and an additional oxidation step, leading to flavipucine. Formation of isoflavipucine from flavipucine requires an unusual rearrangement. Alternative rearrangement reactions could build up rubrobramide, representing a branching of flavipucine biosynthesis. The enzymes involved in the post-PKS-NRPS steps have not been identified yet, but the putative oxygenases ATEG_003329 and ATEG_00330 encoded by the cluster could play a role. In Aspergillus terreus (strain NIH 2624 / FGSC A1156), this protein is Putative oxygenase ATEG_00330.